Reading from the N-terminus, the 250-residue chain is MKICLIDETGAGDGALSVLAARWGLEHDEDNLMALVLTPEHLELRKRDEPKLGGIFVDFVGGAMAHRRKFGGGRGEAVAKAVGIKGDYLPDVVDATAGLGRDAFVLASVGCRVRMLERNPVVAALLDDGLARGYADAEIGGWLQERLQLIHASSLTALTDITPRPQVVYLDPMFPHKQKSALVKKEMRVFQSLVGPDLDADGLLEPARLLATKRVVVKRPDYAPPLANVATPNAVVTKGHRFDIYAGTPV.

Residues 101–102, 117–118, 153–154, and aspartate 171 each bind S-adenosyl-L-methionine; these read RD, ER, and SS.

The protein belongs to the methyltransferase superfamily. RsmJ family.

The protein localises to the cytoplasm. The enzyme catalyses guanosine(1516) in 16S rRNA + S-adenosyl-L-methionine = N(2)-methylguanosine(1516) in 16S rRNA + S-adenosyl-L-homocysteine + H(+). Specifically methylates the guanosine in position 1516 of 16S rRNA. This chain is Ribosomal RNA small subunit methyltransferase J, found in Shigella flexneri serotype 5b (strain 8401).